Reading from the N-terminus, the 470-residue chain is Nuclear receptor ROR-beta (470 aa).

Residues 18–93 constitute a DNA-binding region (nuclear receptor); the sequence is VIPCKICGDK…LGMSRDAVKF (76 aa). NR C4-type zinc fingers lie at residues 21–41 and 57–81; these read CKICGDKSSGIHYGVITCEGC and CPRQRNCLIDRTNRNRCQHCRLQKC. Residues 104–117 are compositionally biased toward basic and acidic residues; sequence LYAEVQKHQQRLQE. Residues 104-127 form a disordered region; sequence LYAEVQKHQQRLQEQRQQQSGEAE. An NR LBD domain is found at 222–460; sequence EIDRIAQNII…TLFPPLYKEL (239 aa). The AF-2 signature appears at 456-461; that stretch reads LYKELF.

It belongs to the nuclear hormone receptor family. NR1 subfamily. As to quaternary structure, monomer. Interacts with CRX.

Its subcellular location is the nucleus. The protein resides in the nucleoplasm. In terms of biological role, nuclear receptor that binds DNA as a monomer to ROR response elements (RORE) containing a single core motif half-site 5'-AGGTCA-3' preceded by a short A-T-rich sequence. Considered to have intrinsic transcriptional activity, have some natural ligands such as all-trans retinoic acid (ATRA) and other retinoids which act as inverse agonists repressing the transcriptional activity. Required for normal postnatal development of rod and cone photoreceptor cells. Modulates rod photoreceptors differentiation at least by inducing the transcription factor NRL-mediated pathway. In cone photoreceptor cells, regulates transcription of OPN1SW. Involved in the regulation of the period length and stability of the circadian rhythm. May control cytoarchitectural patterning of neocortical neurons during development. May act in a dose-dependent manner to regulate barrel formation upon innervation of layer IV neurons by thalamocortical axons. May play a role in the suppression of osteoblastic differentiation through the inhibition of RUNX2 transcriptional activity. Isoform 1 is critical for hindlimb motor control and for the differentiation of amacrine and horizontal cells in the retina. Regulates the expression of PTF1A synergistically with FOXN4. This is Nuclear receptor ROR-beta (RORB) from Homo sapiens (Human).